A 514-amino-acid chain; its full sequence is Serine/threonine protein phosphatase PstP (514 aa).

Residues 1 to 302 (MARVTLVLRY…RPRWSGRRLA (302 aa)) are Cytoplasmic-facing. One can recognise a PPM-type phosphatase domain in the interval 9-238 (RYAARSDRGL…DNVTVVVADV (230 aa)). Mn(2+) contacts are provided by D38, G39, D118, S160, D191, and D229. A helical transmembrane segment spans residues 303-323 (FVVALVTVLMTAGLLIGRAII). At 324–514 (RSNYYVADYA…QPGIDCRAAA (191 aa)) the chain is on the extracellular side. The disordered stretch occupies residues 420–514 (LLPPCPAPRA…QPGIDCRAAA (95 aa)). Over residues 440–480 (TTSETTEPNVTSSPASPSPTTSASAPTGTTPAIPTSASPAA) the composition is skewed to low complexity.

Requires Mn(2+) as cofactor.

It is found in the cell membrane. The catalysed reaction is O-phospho-L-seryl-[protein] + H2O = L-seryl-[protein] + phosphate. It catalyses the reaction O-phospho-L-threonyl-[protein] + H2O = L-threonyl-[protein] + phosphate. Its function is as follows. Plays an important role in regulating cell division and growth by reversible phosphorylation signaling. May play important roles in regulating cellular metabolism and signaling pathways, which could mediate the growth and development of the cell. Plays a role in establishing and maintaining infection. The sequence is that of Serine/threonine protein phosphatase PstP (pstP) from Mycobacterium tuberculosis (strain CDC 1551 / Oshkosh).